The following is a 256-amino-acid chain: Thiazole synthase (256 aa).

K96 functions as the Schiff-base intermediate with DXP in the catalytic mechanism. Residues G157, A184–G185, and N206–T207 contribute to the 1-deoxy-D-xylulose 5-phosphate site.

It belongs to the ThiG family. In terms of assembly, homotetramer. Forms heterodimers with either ThiH or ThiS.

The protein localises to the cytoplasm. The enzyme catalyses [ThiS sulfur-carrier protein]-C-terminal-Gly-aminoethanethioate + 2-iminoacetate + 1-deoxy-D-xylulose 5-phosphate = [ThiS sulfur-carrier protein]-C-terminal Gly-Gly + 2-[(2R,5Z)-2-carboxy-4-methylthiazol-5(2H)-ylidene]ethyl phosphate + 2 H2O + H(+). Its pathway is cofactor biosynthesis; thiamine diphosphate biosynthesis. Catalyzes the rearrangement of 1-deoxy-D-xylulose 5-phosphate (DXP) to produce the thiazole phosphate moiety of thiamine. Sulfur is provided by the thiocarboxylate moiety of the carrier protein ThiS. In vitro, sulfur can be provided by H(2)S. The sequence is that of Thiazole synthase from Brucella canis (strain ATCC 23365 / NCTC 10854 / RM-666).